The primary structure comprises 354 residues: Uroporphyrinogen decarboxylase (354 aa).

Substrate is bound by residues 27 to 31 (RQAGR), Asp77, Tyr154, Thr209, and His327.

Belongs to the uroporphyrinogen decarboxylase family. In terms of assembly, homodimer.

The protein resides in the cytoplasm. The catalysed reaction is uroporphyrinogen III + 4 H(+) = coproporphyrinogen III + 4 CO2. It functions in the pathway porphyrin-containing compound metabolism; protoporphyrin-IX biosynthesis; coproporphyrinogen-III from 5-aminolevulinate: step 4/4. In terms of biological role, catalyzes the decarboxylation of four acetate groups of uroporphyrinogen-III to yield coproporphyrinogen-III. The sequence is that of Uroporphyrinogen decarboxylase from Salmonella paratyphi A (strain ATCC 9150 / SARB42).